The following is a 202-amino-acid chain: Small ribosomal subunit protein uS4c (202 aa).

An S4 RNA-binding domain is found at 90-165 (MRLDNILFRL…SQKYKIPNHL (76 aa)).

The protein belongs to the universal ribosomal protein uS4 family. Part of the 30S ribosomal subunit. Contacts protein S5. The interaction surface between S4 and S5 is involved in control of translational fidelity.

Its subcellular location is the plastid. The protein localises to the chloroplast. One of the primary rRNA binding proteins, it binds directly to 16S rRNA where it nucleates assembly of the body of the 30S subunit. In terms of biological role, with S5 and S12 plays an important role in translational accuracy. The chain is Small ribosomal subunit protein uS4c (rps4) from Diphyscium foliosum (Nut-moss).